Consider the following 605-residue polypeptide: Membrane protein insertase YidC (605 aa).

A helical transmembrane segment spans residues 8 to 28; it reads MIIAIALSLAVLLGWNYFVAA. A compositionally biased stretch (low complexity) spans 35–47; the sequence is RQQQAQTSASPSP. The segment at 35 to 71 is disordered; that stretch reads RQQQAQTSASPSPKEGGPSAPVPGTLPGASGGNPQAA. 4 helical membrane passes run 377–397, 451–471, 496–516, and 540–560; these read LFGN…LFFL, WPVV…FVTI, LFGL…WPIV, and FTFM…GLVI.

The protein belongs to the OXA1/ALB3/YidC family. Type 1 subfamily. Interacts with the Sec translocase complex via SecD. Specifically interacts with transmembrane segments of nascent integral membrane proteins during membrane integration.

It is found in the cell inner membrane. Its function is as follows. Required for the insertion and/or proper folding and/or complex formation of integral membrane proteins into the membrane. Involved in integration of membrane proteins that insert both dependently and independently of the Sec translocase complex, as well as at least some lipoproteins. Aids folding of multispanning membrane proteins. In Methylobacterium nodulans (strain LMG 21967 / CNCM I-2342 / ORS 2060), this protein is Membrane protein insertase YidC.